Reading from the N-terminus, the 143-residue chain is Nucleoside diphosphate kinase (143 aa).

ATP-binding residues include lysine 10, phenylalanine 58, arginine 86, threonine 92, arginine 103, and asparagine 113. The active-site Pros-phosphohistidine intermediate is the histidine 116.

It belongs to the NDK family. In terms of assembly, homotetramer. Requires Mg(2+) as cofactor.

It localises to the cytoplasm. It catalyses the reaction a 2'-deoxyribonucleoside 5'-diphosphate + ATP = a 2'-deoxyribonucleoside 5'-triphosphate + ADP. The catalysed reaction is a ribonucleoside 5'-diphosphate + ATP = a ribonucleoside 5'-triphosphate + ADP. Major role in the synthesis of nucleoside triphosphates other than ATP. The ATP gamma phosphate is transferred to the NDP beta phosphate via a ping-pong mechanism, using a phosphorylated active-site intermediate. The polypeptide is Nucleoside diphosphate kinase (Ehrlichia ruminantium (strain Welgevonden)).